Consider the following 119-residue polypeptide: uncharacterized protein (119 aa).

The stretch at 63–104 forms a coiled coil; the sequence is KKIKKELESNSEKRKAALQMIKEEHTAKVDRYKMIIEDLRQQ.

This is an uncharacterized protein from Bacillus subtilis (strain 168).